Here is a 121-residue protein sequence, read N- to C-terminus: Large ribosomal subunit protein bL12 (121 aa).

This sequence belongs to the bacterial ribosomal protein bL12 family. Homodimer. Part of the ribosomal stalk of the 50S ribosomal subunit. Forms a multimeric L10(L12)X complex, where L10 forms an elongated spine to which 2 to 4 L12 dimers bind in a sequential fashion. Binds GTP-bound translation factors.

Forms part of the ribosomal stalk which helps the ribosome interact with GTP-bound translation factors. Is thus essential for accurate translation. This is Large ribosomal subunit protein bL12 from Acinetobacter baylyi (strain ATCC 33305 / BD413 / ADP1).